The primary structure comprises 161 residues: Myosin regulatory light chain (161 aa).

2 positions are modified to phosphoserine: Ser13 and Ser14. 3 consecutive EF-hand domains span residues 20-55 (EQVA…FGVF), 56-91 (VMED…RMKQ), and 93-128 (SNEQ…LGDK).

In terms of assembly, myosin is a hexamer of 2 heavy chains and 4 light chains (two regulatory light chains and two essential light chains).

This chain is Myosin regulatory light chain (mlcR), found in Dictyostelium discoideum (Social amoeba).